Here is a 361-residue protein sequence, read N- to C-terminus: Phosphoserine aminotransferase (361 aa).

Serine 9 and arginine 42 together coordinate L-glutamate. Pyridoxal 5'-phosphate contacts are provided by residues 76 to 77 (AR), tryptophan 102, threonine 153, aspartate 173, and glutamine 196. An N6-(pyridoxal phosphate)lysine modification is found at lysine 197. Residue 238–239 (NT) participates in pyridoxal 5'-phosphate binding.

Belongs to the class-V pyridoxal-phosphate-dependent aminotransferase family. SerC subfamily. As to quaternary structure, homodimer. Requires pyridoxal 5'-phosphate as cofactor.

The protein localises to the cytoplasm. It carries out the reaction O-phospho-L-serine + 2-oxoglutarate = 3-phosphooxypyruvate + L-glutamate. It catalyses the reaction 4-(phosphooxy)-L-threonine + 2-oxoglutarate = (R)-3-hydroxy-2-oxo-4-phosphooxybutanoate + L-glutamate. Its pathway is amino-acid biosynthesis; L-serine biosynthesis; L-serine from 3-phospho-D-glycerate: step 2/3. The protein operates within cofactor biosynthesis; pyridoxine 5'-phosphate biosynthesis; pyridoxine 5'-phosphate from D-erythrose 4-phosphate: step 3/5. Functionally, catalyzes the reversible conversion of 3-phosphohydroxypyruvate to phosphoserine and of 3-hydroxy-2-oxo-4-phosphonooxybutanoate to phosphohydroxythreonine. The sequence is that of Phosphoserine aminotransferase from Sodalis glossinidius (strain morsitans).